Reading from the N-terminus, the 569-residue chain is MSNAMTSKLERFIDQGVGRVPADIVLKGGCFFDLVTGELVQSDIAIGADRIVGTSGNYEGETEIDISGRIVVPGFIDTHLHIESSLVTPHEFDRCVLPYGVTTAICDPHEIANVLGAAGIEFFLESALETIMDIRVQLSSCVPATHLETSGADLPIESLLPYRHHPKVIGLAEFMNFPGVIHKDPICMAKLDAFQGGHIDGHAPLLSGNDLNGYLAAGIRTEHECTTASEALEKIRKGVHILVREGSVSKDLAALMPIITERLSPFLALCTDDRNPLDIAEQGHLDHMIRTAIASRVEPLAIYRAASISAARAFGLKDRGLVAPGWRADLVVLDSLENCRADMVFSAGRRVTDALFSSRRPVAPIGLDSVKARPVNAAHFGVPVAEGETPVIGVIPGKIITEHRRYRLPVRGNEAAVDLANDIIKVAVIERHGKNGNHANGFVQGFGLKKGAIASTVGHDSHNICVVGVSEDDMARAANRLSEIKGGFVVVEDGKVTGEIALPIAGLMSLEPYETVRDTLHQLRKAAFALGATLEEPFLQLAFLPLPVIPHLKISDRGMVDVDKFALIG.

This sequence belongs to the metallo-dependent hydrolases superfamily. Adenine deaminase family. Mn(2+) is required as a cofactor.

It carries out the reaction adenine + H2O + H(+) = hypoxanthine + NH4(+). This is Adenine deaminase 1 from Rhizobium johnstonii (strain DSM 114642 / LMG 32736 / 3841) (Rhizobium leguminosarum bv. viciae).